A 181-amino-acid chain; its full sequence is Peptidyl-tRNA hydrolase (181 aa).

Position 14 (Y14) interacts with tRNA. H19 acts as the Proton acceptor in catalysis. TRNA-binding residues include Y62, N64, and N108.

It belongs to the PTH family. Monomer.

The protein resides in the cytoplasm. It catalyses the reaction an N-acyl-L-alpha-aminoacyl-tRNA + H2O = an N-acyl-L-amino acid + a tRNA + H(+). Hydrolyzes ribosome-free peptidyl-tRNAs (with 1 or more amino acids incorporated), which drop off the ribosome during protein synthesis, or as a result of ribosome stalling. Functionally, catalyzes the release of premature peptidyl moieties from peptidyl-tRNA molecules trapped in stalled 50S ribosomal subunits, and thus maintains levels of free tRNAs and 50S ribosomes. In Campylobacter jejuni (strain RM1221), this protein is Peptidyl-tRNA hydrolase.